The chain runs to 293 residues: Tyrosine recombinase XerD (293 aa).

Residues 1 to 83 (MHGLIADFIH…ALRKFYRFLL (83 aa)) form the Core-binding (CB) domain. The Tyr recombinase domain maps to 104–287 (HLPATLSGTE…SNQHLVAVYH (184 aa)). Residues R144, K168, H239, R242, and H265 contribute to the active site. The active-site O-(3'-phospho-DNA)-tyrosine intermediate is the Y274.

This sequence belongs to the 'phage' integrase family. XerD subfamily. As to quaternary structure, forms a cyclic heterotetrameric complex composed of two molecules of XerC and two molecules of XerD.

The protein resides in the cytoplasm. Site-specific tyrosine recombinase, which acts by catalyzing the cutting and rejoining of the recombining DNA molecules. The XerC-XerD complex is essential to convert dimers of the bacterial chromosome into monomers to permit their segregation at cell division. It also contributes to the segregational stability of plasmids. In Lacticaseibacillus casei (Lactobacillus casei), this protein is Tyrosine recombinase XerD.